A 730-amino-acid polypeptide reads, in one-letter code: S-adenosyl-L-methionine-dependent tRNA 4-demethylwyosine synthase TYW1 (730 aa).

The region spanning 79 to 237 is the Flavodoxin-like domain; sequence VKVFYGSQTG…DFQVWKGKFL (159 aa). FMN is bound by residues 85-89 and 176-208; these read SQTGT and VFGL…ARIM. The segment at 253–351 is disordered; the sequence is GNCKKASCKN…RKSECEEERR (99 aa). Residues 267-282 are compositionally biased toward basic and acidic residues; it reads KEEAEDNHSLAEKNNS. The segment covering 283 to 297 has biased composition (acidic residues); it reads EEELMESSSDEESSS. Residues 333-351 show a composition bias toward basic and acidic residues; it reads SQRVKQNGERKSECEEERR. Positions 398 to 642 constitute a Radical SAM core domain; the sequence is YGIESHRCME…ANLLPDYEIA (245 aa). The [4Fe-4S] cluster site is built by C414, C418, and C421.

The protein belongs to the TYW1 family. Requires [4Fe-4S] cluster as cofactor.

The catalysed reaction is N(1)-methylguanosine(37) in tRNA(Phe) + pyruvate + S-adenosyl-L-methionine = 4-demethylwyosine(37) in tRNA(Phe) + 5'-deoxyadenosine + L-methionine + CO2 + H2O. It functions in the pathway tRNA modification; wybutosine-tRNA(Phe) biosynthesis. In terms of biological role, probable component of the wybutosine biosynthesis pathway. Wybutosine is a hyper modified guanosine with a tricyclic base found at the 3'-position adjacent to the anticodon of eukaryotic phenylalanine tRNA. Catalyzes the condensation of N-methylguanine with 2 carbon atoms from pyruvate to form the tricyclic 4-demethylwyosine, an intermediate in wybutosine biosynthesis. This Danio rerio (Zebrafish) protein is S-adenosyl-L-methionine-dependent tRNA 4-demethylwyosine synthase TYW1 (tyw1).